The following is a 258-amino-acid chain: Shikimate dehydrogenase (NADP(+)) (258 aa).

Residues 14–16 (SES) and Thr-61 contribute to the shikimate site. The active-site Proton acceptor is the Lys-65. Residues Asn-86 and Asp-101 each coordinate shikimate. NADP(+) contacts are provided by residues 125 to 129 (GSGGS) and Leu-211. Tyr-213 is a binding site for shikimate. Gly-234 serves as a coordination point for NADP(+).

It belongs to the shikimate dehydrogenase family. Homodimer.

It catalyses the reaction shikimate + NADP(+) = 3-dehydroshikimate + NADPH + H(+). It participates in metabolic intermediate biosynthesis; chorismate biosynthesis; chorismate from D-erythrose 4-phosphate and phosphoenolpyruvate: step 4/7. Functionally, involved in the biosynthesis of the chorismate, which leads to the biosynthesis of aromatic amino acids. Catalyzes the reversible NADPH linked reduction of 3-dehydroshikimate (DHSA) to yield shikimate (SA). The protein is Shikimate dehydrogenase (NADP(+)) of Clostridium botulinum (strain 657 / Type Ba4).